The primary structure comprises 248 residues: Urease accessory protein UreG 1 (248 aa).

A compositionally biased stretch (basic and acidic residues) spans 1 to 14 (MLPEHHDHGHEHGG). Residues 1-36 (MLPEHHDHGHEHGGNGHGHGHRHQVNFDPTAAEPDP) are disordered. A GTP-binding site is contributed by 53 to 60 (GPVGSGKT).

Belongs to the SIMIBI class G3E GTPase family. UreG subfamily. Homodimer. UreD, UreF and UreG form a complex that acts as a GTP-hydrolysis-dependent molecular chaperone, activating the urease apoprotein by helping to assemble the nickel containing metallocenter of UreC. The UreE protein probably delivers the nickel.

It localises to the cytoplasm. In terms of biological role, facilitates the functional incorporation of the urease nickel metallocenter. This process requires GTP hydrolysis, probably effectuated by UreG. This is Urease accessory protein UreG 1 from Saccharopolyspora erythraea (strain ATCC 11635 / DSM 40517 / JCM 4748 / NBRC 13426 / NCIMB 8594 / NRRL 2338).